The primary structure comprises 331 residues: MAVFTAVSNADLALWMRHYDLGDVVAFRGIPSGIENSNFFLTTTRGEYVLTIFENLTAGQLPFYVDLMSHLAKHGVPVPAPVARDDGTLFGELHGKPAAIVTKLEGAAQLAPGVEHCVEVGQMLARMHLAGRDYPRHQPNLRSLPWWRDTVPAIAPFVTGEQRALLEGELAHQAAFFASDDYAALPEGPCHCDLFRDNALFAHAEPDTGHSVRLGGFFDFYFAGCDKWLFDVAVTVNDWCVDLPTGALDAARADALLRAYQTVRPFTAGERRHWGDMLRAGAYRFWVSRLYDFHLPRAAQMLKPHDPGHFERILRERIAHAGALPETHACN.

It belongs to the pseudomonas-type ThrB family.

It catalyses the reaction L-homoserine + ATP = O-phospho-L-homoserine + ADP + H(+). It participates in amino-acid biosynthesis; L-threonine biosynthesis; L-threonine from L-aspartate: step 4/5. In Burkholderia pseudomallei (strain 1710b), this protein is Homoserine kinase.